The following is a 404-amino-acid chain: Cytochrome b (404 aa).

The next 4 helical transmembrane spans lie at 35–55 (FGSL…FLAM), 79–101 (WLLR…LHFF), 116–136 (VWCL…IGYV), and 182–202 (FFSL…LHLA). Residues His85 and His99 each coordinate heme b. Residues His186 and His200 each coordinate heme b. Position 205 (His205) interacts with a ubiquinone. Helical transmembrane passes span 228-248 (IYVK…IFVF), 292-312 (LGGV…PFIN), 324-344 (IHQK…WIGC), and 351-370 (YVTI…AITP).

This sequence belongs to the cytochrome b family. The main subunits of complex b-c1 are: cytochrome b, cytochrome c1 and the Rieske protein. Requires heme b as cofactor.

It is found in the mitochondrion inner membrane. Its function is as follows. Component of the ubiquinol-cytochrome c reductase complex (complex III or cytochrome b-c1 complex) that is part of the mitochondrial respiratory chain. The b-c1 complex mediates electron transfer from ubiquinol to cytochrome c. Contributes to the generation of a proton gradient across the mitochondrial membrane that is then used for ATP synthesis. The chain is Cytochrome b (MT-CYB) from Marchantia polymorpha (Common liverwort).